A 525-amino-acid polypeptide reads, in one-letter code: Allantoate deiminase (525 aa).

Positions 1–53 (MAVPHPSSSSSRSHPFLSHVYHTSFHHHHHHNHPSLVLFWCLVFSLLSPLALS) are cleaved as a signal peptide. The span at 56-75 (SSSSSSSSDSSSSSSSHISL) shows a compositional bias: low complexity. The tract at residues 56–78 (SSSSSSSSDSSSSSSSHISLGIG) is disordered. The N-linked (GlcNAc...) asparagine glycan is linked to Asn156. 5 residues coordinate Mn(2+): His167, Asp178, Glu215, His281, and His499.

Belongs to the peptidase M20A family. As to quaternary structure, homodimer. The cofactor is Mn(2+). In terms of tissue distribution, expressed in seedlings, roots, stems, leaves, flowers, siliques and seeds.

It is found in the endoplasmic reticulum. The catalysed reaction is allantoate + H2O + 2 H(+) = (S)-2-ureidoglycine + NH4(+) + CO2. With respect to regulation, inhibited by borate, fluoride, L-Asn and L-Asp, but not by phenylphosphorodiamidate. Its function is as follows. Involved in the catabolism of purine nucleotides. Can use allantoate as substrate, but not Nalpha-carbamoyl-L-Asp, Nalpha-carbamoyl-L-Ala or Nalpha-carbamoyl-Gly. The sequential activity of AAH, UGLYAH and UAH allows a complete purine breakdown without the intermediate generation of urea. Involved in the regulation of seed maturation and seed dormancy. The sequence is that of Allantoate deiminase from Arabidopsis thaliana (Mouse-ear cress).